Consider the following 141-residue polypeptide: Hemoglobin subunit alpha-D (141 aa).

One can recognise a Globin domain in the interval 1-141; sequence MLTAEDKKLI…VAAVLAGKYR (141 aa). Residues histidine 58 and histidine 87 each coordinate heme b.

It belongs to the globin family. In terms of assembly, heterotetramer of two alpha-D chains and two beta chains. Red blood cells.

Functionally, involved in oxygen transport from the lung to the various peripheral tissues. This chain is Hemoglobin subunit alpha-D (HBAD), found in Coturnix japonica (Japanese quail).